Reading from the N-terminus, the 84-residue chain is UPF0473 protein CLI_2624 (84 aa).

This sequence belongs to the UPF0473 family.

The sequence is that of UPF0473 protein CLI_2624 from Clostridium botulinum (strain Langeland / NCTC 10281 / Type F).